The primary structure comprises 429 residues: MKTSILILAAGLGTRIKSQKPKVLQELCQKSMILHILKKAFALSDDVSVVLSHQKERVEKEILEYFPKTQILEQDLQNYPGTAGALSGFEPKNERVLILCGDMPLVEQTSLEALLGNNAKLNLAVFKARDPKSYGRVVIKNDSVEKIVEFKDANTQEKEINTCNAGVYVIDSRLLKELLPLIDNNNAAKEYYLTDIVKLAKEKDVMIKAVFVDEDEFMGINDKFELSIAENFMQKKIKKYWMQQGVIFHLPQSTFIGADVEFVGECEVYENVRIEGKSKIINSIIKSSSVIENSIVENSDVGPLAHLRPNCELKNTHIGNFVECKNAKLNTVKAGHLSYLGDCEIDSGTNIGCGTITCNYDGVKKHKTIIGKNVFVGSDTQFIAPVKIEDEVIIAAGSTVSINVEKGALFINRAGHKMIKDYYYKKFQK.

A pyrophosphorylase region spans residues M1–K223. UDP-N-acetyl-alpha-D-glucosamine is bound by residues L8 to G11, K22, and G81 to T82. Mg(2+) is bound at residue D102. G135, E149, N164, and N221 together coordinate UDP-N-acetyl-alpha-D-glucosamine. Residue N221 coordinates Mg(2+). The segment at F224–Q244 is linker. Residues G245–K429 form an N-acetyltransferase region. UDP-N-acetyl-alpha-D-glucosamine-binding residues include R308 and K325. H336 serves as the catalytic Proton acceptor. Positions 339 and 350 each coordinate UDP-N-acetyl-alpha-D-glucosamine. Acetyl-CoA-binding positions include N359 to Y360, S378, A396, and R413.

The protein in the N-terminal section; belongs to the N-acetylglucosamine-1-phosphate uridyltransferase family. This sequence in the C-terminal section; belongs to the transferase hexapeptide repeat family. In terms of assembly, homotrimer. The cofactor is Mg(2+).

The protein resides in the cytoplasm. It carries out the reaction alpha-D-glucosamine 1-phosphate + acetyl-CoA = N-acetyl-alpha-D-glucosamine 1-phosphate + CoA + H(+). The catalysed reaction is N-acetyl-alpha-D-glucosamine 1-phosphate + UTP + H(+) = UDP-N-acetyl-alpha-D-glucosamine + diphosphate. It functions in the pathway nucleotide-sugar biosynthesis; UDP-N-acetyl-alpha-D-glucosamine biosynthesis; N-acetyl-alpha-D-glucosamine 1-phosphate from alpha-D-glucosamine 6-phosphate (route II): step 2/2. Its pathway is nucleotide-sugar biosynthesis; UDP-N-acetyl-alpha-D-glucosamine biosynthesis; UDP-N-acetyl-alpha-D-glucosamine from N-acetyl-alpha-D-glucosamine 1-phosphate: step 1/1. It participates in bacterial outer membrane biogenesis; LPS lipid A biosynthesis. Catalyzes the last two sequential reactions in the de novo biosynthetic pathway for UDP-N-acetylglucosamine (UDP-GlcNAc). The C-terminal domain catalyzes the transfer of acetyl group from acetyl coenzyme A to glucosamine-1-phosphate (GlcN-1-P) to produce N-acetylglucosamine-1-phosphate (GlcNAc-1-P), which is converted into UDP-GlcNAc by the transfer of uridine 5-monophosphate (from uridine 5-triphosphate), a reaction catalyzed by the N-terminal domain. This chain is Bifunctional protein GlmU, found in Campylobacter jejuni subsp. jejuni serotype O:2 (strain ATCC 700819 / NCTC 11168).